A 151-amino-acid chain; its full sequence is Transcription elongation factor Spt5 (151 aa).

A KOW domain is found at proline 98–valine 128.

Belongs to the archaeal Spt5 family. In terms of assembly, heterodimer composed of Spt4 and Spt5. Interacts with RNA polymerase (RNAP).

Functionally, stimulates transcription elongation. The protein is Transcription elongation factor Spt5 of Aeropyrum pernix (strain ATCC 700893 / DSM 11879 / JCM 9820 / NBRC 100138 / K1).